Consider the following 752-residue polypeptide: Lid2 complex component jmj3 (752 aa).

The region spanning 34–75 is the JmjN domain; the sequence is IPVVEPKISEFVDMESFIRRVERLGKKYGAIKVVRPSSVLNP. The JmjC domain maps to 162 to 333; that stretch reads YTNRPSIPFY…NYEFSNLRRL (172 aa). Polar residues-rich tracts occupy residues 391–402 and 409–423; these read SFSQRDFDSPNS and LMSN…HFNS. The disordered stretch occupies residues 391-438; that stretch reads SFSQRDFDSPNSINPPSPLMSNHESASTEHFNSTTTTEKELSSLHVGE. Residues 427–438 show a composition bias toward basic and acidic residues; the sequence is TEKELSSLHVGE.

As to quaternary structure, component of the Lid2 complex composed of ash2, jmj3, lid2, sdc1 and snt2.

The protein localises to the nucleus. The chain is Lid2 complex component jmj3 from Schizosaccharomyces pombe (strain 972 / ATCC 24843) (Fission yeast).